The following is a 342-amino-acid chain: Lumican (342 aa).

A signal peptide spans 1 to 18; that stretch reads MNLGVFPLLLALIGGASS. Residues Tyr20, Tyr23, and Tyr34 each carry the sulfotyrosine modification. Residues 32-70 enclose the LRRNT domain; it reads ALYGRSSPNCAPECNCPESYPSAMYCDELKLKSVPMVPP. LRR repeat units lie at residues 71–92, 95–118, 121–141, 142–163, 164–185, 189–209, 210–231, and 234–254; these read GIKY…AFEN, DLQW…VFSK, QLKK…PLPK, SLVD…DGLV, NLTF…AALK, SLEY…GLPV, SLLT…YFKR, and ALQY…PGNS. An N-linked (GlcNAc...) (keratan sulfate) asparagine glycan is attached at Asn92. A glycan (N-linked (GlcNAc...) (keratan sulfate) asparagine) is linked at Asn131. Residue Asn164 is glycosylated (N-linked (GlcNAc...) (keratan sulfate) asparagine). An N-linked (GlcNAc...) (keratan sulfate) asparagine glycan is attached at Asn256. LRR repeat units lie at residues 259-280 and 281-300; these read SLLE…NENL and ENYY…SFCK. Cys299 and Cys332 form a disulfide bridge. Ser308 bears the Phosphoserine mark. The LRR 11 repeat unit spans residues 309–330; it reads KIKHLRLDGNHITQTSLPPDMY.

Belongs to the small leucine-rich proteoglycan (SLRP) family. SLRP class II subfamily. As to quaternary structure, binds to laminin. Post-translationally, sulfated on tyrosine residue(s). Contains keratan sulfate. As to expression, cornea and other tissues.

It is found in the secreted. The protein resides in the extracellular space. The protein localises to the extracellular matrix. The sequence is that of Lumican (LUM) from Bos taurus (Bovine).